A 191-amino-acid polypeptide reads, in one-letter code: UPF0312 protein Sputcn32_2702 (191 aa).

An N-terminal signal peptide occupies residues M1 to A22.

Belongs to the UPF0312 family. Type 1 subfamily.

The protein localises to the periplasm. The sequence is that of UPF0312 protein Sputcn32_2702 from Shewanella putrefaciens (strain CN-32 / ATCC BAA-453).